A 328-amino-acid chain; its full sequence is Biotin synthase (328 aa).

The 232-residue stretch at 51–282 folds into the Radical SAM core domain; that stretch reads FNGNHVDLCS…DKIIRYAGGR (232 aa). The [4Fe-4S] cluster site is built by Cys-69, Cys-73, and Cys-76. Cys-112, Cys-147, Cys-207, and Arg-277 together coordinate [2Fe-2S] cluster.

Belongs to the radical SAM superfamily. Biotin synthase family. As to quaternary structure, homodimer. The cofactor is [4Fe-4S] cluster. Requires [2Fe-2S] cluster as cofactor.

The enzyme catalyses (4R,5S)-dethiobiotin + (sulfur carrier)-SH + 2 reduced [2Fe-2S]-[ferredoxin] + 2 S-adenosyl-L-methionine = (sulfur carrier)-H + biotin + 2 5'-deoxyadenosine + 2 L-methionine + 2 oxidized [2Fe-2S]-[ferredoxin]. Its pathway is cofactor biosynthesis; biotin biosynthesis; biotin from 7,8-diaminononanoate: step 2/2. Catalyzes the conversion of dethiobiotin (DTB) to biotin by the insertion of a sulfur atom into dethiobiotin via a radical-based mechanism. This Clostridium acetobutylicum (strain ATCC 824 / DSM 792 / JCM 1419 / IAM 19013 / LMG 5710 / NBRC 13948 / NRRL B-527 / VKM B-1787 / 2291 / W) protein is Biotin synthase.